Here is a 61-residue protein sequence, read N- to C-terminus: Small ribosomal subunit protein uS14B (61 aa).

Residues Cys-24, Cys-27, Cys-40, and Cys-43 each coordinate Zn(2+).

The protein belongs to the universal ribosomal protein uS14 family. Zinc-binding uS14 subfamily. Part of the 30S ribosomal subunit. Contacts proteins S3 and S10. Zn(2+) is required as a cofactor.

In terms of biological role, binds 16S rRNA, required for the assembly of 30S particles and may also be responsible for determining the conformation of the 16S rRNA at the A site. This chain is Small ribosomal subunit protein uS14B, found in Staphylococcus saprophyticus subsp. saprophyticus (strain ATCC 15305 / DSM 20229 / NCIMB 8711 / NCTC 7292 / S-41).